The sequence spans 1530 residues: Glutamate-rich protein 3 (1530 aa).

Disordered stretches follow at residues 165–187 (RLQP…RSRS), 408–429 (SLPK…KAEG), 475–661 (MTSK…PMPI), 673–724 (TEKG…GLEE), 773–870 (EAME…AVGL), 923–1146 (REAA…LLGE), 1167–1334 (LENI…GMGG), 1360–1383 (LAGS…DVAE), and 1425–1530 (YTTE…NVQV). Composition is skewed to basic and acidic residues over residues 415–429 (EKST…KAEG), 531–545 (LDDK…KESE), and 552–562 (PDARDNVKDEN). The segment covering 563–574 (DGCSESELEEDK) has biased composition (acidic residues). Residues 581 to 592 (SSTSSRSHPYSS) are compositionally biased toward low complexity. Positions 600-616 (VGDREAHTDSSTDESAR) are enriched in basic and acidic residues. Positions 638-647 (ESLEIEIEDQ) are enriched in acidic residues. Composition is skewed to basic and acidic residues over residues 684–717 (LSEK…DKKA) and 773–787 (EAME…RDAD). Residues 834-845 (GIERGAEGAAEA) show a composition bias toward low complexity. Residues 943-958 (GESEEEASIDLEDTGP) show a composition bias toward acidic residues. Basic and acidic residues-rich tracts occupy residues 979–992 (EPAK…RTET), 1039–1116 (EANR…EETK), and 1173–1212 (LRKE…RQDG). Low complexity predominate over residues 1213–1225 (EGALAAPEAEPAG). The segment covering 1289 to 1300 (AVDEDPEEEEDK) has biased composition (acidic residues). Composition is skewed to basic and acidic residues over residues 1464-1487 (GRQE…RELS) and 1502-1511 (DFTETREKQQ). Residues 1517-1530 (ESETADVSPNNVQV) show a composition bias toward polar residues.

Interacts with CLTC/clathrin heavy chain 1, AP2A2/AP-2 complex subunit alpha-2, and PIK3C2A/phosphatidylinositol 4-phosphate 3-kinase C2 domain-containing subunit alpha. In terms of tissue distribution, expressed in dopaminergic and serotoninergic neurons.

It is found in the cell projection. Its subcellular location is the cilium. The protein localises to the cytoplasm. Its function is as follows. Component of the primary cilium that controls cilium formation and length. May function within retrograde intraflagellar transport (IFT)-associated pathways to remove signaling proteins from primary cilia. Also involved in neuronal vesicle biogenesis and neurotransmitter vesicular function. The sequence is that of Glutamate-rich protein 3 from Homo sapiens (Human).